A 407-amino-acid chain; its full sequence is 1-deoxy-D-xylulose 5-phosphate reductoisomerase (407 aa).

Residues threonine 10, glycine 11, serine 12, isoleucine 13, glycine 36, and asparagine 131 each contribute to the NADPH site. Position 132 (lysine 132) interacts with 1-deoxy-D-xylulose 5-phosphate. Glutamate 133 provides a ligand contact to NADPH. Aspartate 155 serves as a coordination point for Mn(2+). Positions 156, 157, 181, and 204 each coordinate 1-deoxy-D-xylulose 5-phosphate. Position 157 (glutamate 157) interacts with Mn(2+). Glycine 210 lines the NADPH pocket. Positions 217, 222, 223, and 226 each coordinate 1-deoxy-D-xylulose 5-phosphate. Position 226 (glutamate 226) interacts with Mn(2+).

It belongs to the DXR family. Mg(2+) serves as cofactor. The cofactor is Mn(2+).

The enzyme catalyses 2-C-methyl-D-erythritol 4-phosphate + NADP(+) = 1-deoxy-D-xylulose 5-phosphate + NADPH + H(+). Its pathway is isoprenoid biosynthesis; isopentenyl diphosphate biosynthesis via DXP pathway; isopentenyl diphosphate from 1-deoxy-D-xylulose 5-phosphate: step 1/6. Its function is as follows. Catalyzes the NADPH-dependent rearrangement and reduction of 1-deoxy-D-xylulose-5-phosphate (DXP) to 2-C-methyl-D-erythritol 4-phosphate (MEP). This Cutibacterium acnes (strain DSM 16379 / KPA171202) (Propionibacterium acnes) protein is 1-deoxy-D-xylulose 5-phosphate reductoisomerase.